Consider the following 305-residue polypeptide: UDP-3-O-acyl-N-acetylglucosamine deacetylase (305 aa).

The Zn(2+) site is built by histidine 78, histidine 237, and aspartate 241. The active-site Proton donor is the histidine 264.

It belongs to the LpxC family. It depends on Zn(2+) as a cofactor.

It catalyses the reaction a UDP-3-O-[(3R)-3-hydroxyacyl]-N-acetyl-alpha-D-glucosamine + H2O = a UDP-3-O-[(3R)-3-hydroxyacyl]-alpha-D-glucosamine + acetate. The protein operates within glycolipid biosynthesis; lipid IV(A) biosynthesis; lipid IV(A) from (3R)-3-hydroxytetradecanoyl-[acyl-carrier-protein] and UDP-N-acetyl-alpha-D-glucosamine: step 2/6. Functionally, catalyzes the hydrolysis of UDP-3-O-myristoyl-N-acetylglucosamine to form UDP-3-O-myristoylglucosamine and acetate, the committed step in lipid A biosynthesis. In Burkholderia cenocepacia (strain ATCC BAA-245 / DSM 16553 / LMG 16656 / NCTC 13227 / J2315 / CF5610) (Burkholderia cepacia (strain J2315)), this protein is UDP-3-O-acyl-N-acetylglucosamine deacetylase.